The following is a 105-amino-acid chain: Large ribosomal subunit protein uL24 (105 aa).

Belongs to the universal ribosomal protein uL24 family. Part of the 50S ribosomal subunit.

One of two assembly initiator proteins, it binds directly to the 5'-end of the 23S rRNA, where it nucleates assembly of the 50S subunit. Functionally, one of the proteins that surrounds the polypeptide exit tunnel on the outside of the subunit. In Psychrobacter sp. (strain PRwf-1), this protein is Large ribosomal subunit protein uL24.